The chain runs to 261 residues: MATSSSVAAASKRGGGLYWALLSVPVVTFGLGTWQIFRKQQKEELIATLEAKLSKEPAALPTNPADLAHMEYERVAVTGTFLHDQEMLVGPRTVTREVFSGMADLPEAGVQVITPFRLADTGEVILVNRGFVPEAQAPPHKRAAGQVEGTVRLEGIVRHGESQTAFVPDNHPEQNTWYWIDVFTMASNRSALPVLIDATAECTPPGGFPLGGQTNITVRNEHLSYIITWYSISAITLAMWVFLRRKGGNRSGLRAPPPRRT.

Helical transmembrane passes span 17-37 (LYWA…WQIF) and 223-243 (LSYI…WVFL).

This sequence belongs to the SURF1 family.

It is found in the mitochondrion inner membrane. Functionally, probably involved in the biogenesis of the COX complex. In Monosiga brevicollis (Choanoflagellate), this protein is SURF1-like protein.